The following is a 36-amino-acid chain: Pancreatic polypeptide (36 aa).

Phe-36 is subject to Phenylalanine amide.

It belongs to the NPY family.

It is found in the secreted. In terms of biological role, hormone secreted by pancreatic cells that acts as a regulator of pancreatic and gastrointestinal functions. The polypeptide is Pancreatic polypeptide (ppy) (Aquarana catesbeiana (American bullfrog)).